We begin with the raw amino-acid sequence, 118 residues long: Large ribosomal subunit protein bL20 (118 aa).

It belongs to the bacterial ribosomal protein bL20 family.

In terms of biological role, binds directly to 23S ribosomal RNA and is necessary for the in vitro assembly process of the 50S ribosomal subunit. It is not involved in the protein synthesizing functions of that subunit. The chain is Large ribosomal subunit protein bL20 from Synechococcus sp. (strain JA-2-3B'a(2-13)) (Cyanobacteria bacterium Yellowstone B-Prime).